Here is a 1388-residue protein sequence, read N- to C-terminus: Rho-associated protein kinase 2 (1388 aa).

A disordered region spans residues 1-24 (MSRPPPTGKMPGAPEAVSGDGAGA). One can recognise a Protein kinase domain in the interval 92–354 (YDVVKVIGRG…VEEIKQHPFF (263 aa)). Residues 98 to 106 (IGRGAFGEV) and Lys121 each bind ATP. The Proton acceptor role is filled by Asp214. The AGC-kinase C-terminal domain occupies 357 to 425 (DQWNWDNIRE…YRENLLLSDS (69 aa)). An interaction with PPP1R12A region spans residues 363–784 (NIRETAAPVV…INELLKQKDV (422 aa)). The interaction with NPM1 stretch occupies residues 373-420 (PELSSDIDSSNFDDIEDDKGDVETFPIPKAFVGNQLPFIGFTYYRENL). Thr414 carries the post-translational modification Phosphothreonine; by ROCK2. An REM-1 domain is found at 497-573 (ALRQLEREKA…LDETNALLRT (77 aa)). Residues 512-530 (NAEYQRKADHEADKKRNLE) show a composition bias toward basic and acidic residues. Positions 512–532 (NAEYQRKADHEADKKRNLEND) are disordered. Tyr722 is subject to Phosphotyrosine; by SRC. The region spanning 979 to 1047 (TSDVANLANE…LAEIMNRKEP (69 aa)) is the RhoBD domain. The tract at residues 979 to 1047 (TSDVANLANE…LAEIMNRKEP (69 aa)) is RHOA binding. A coiled-coil region spans residues 1054–1126 (TDMRRKEKEN…EQLRSQLQAL (73 aa)). Ser1137 is subject to Phosphoserine. In terms of domain architecture, PH spans 1150-1349 (ESRLEGWLSL…WVSRLVKKIP (200 aa)). The residue at position 1212 (Thr1212) is a Phosphothreonine. The segment at 1260–1315 (GHEFIPTLYHFPTNCEACMKPLWHMFKPPPALECRRCHIKCHKDHMDKKEEIIAPC) adopts a Phorbol-ester/DAG-type zinc-finger fold. The segment at 1345–1388 (VKKIPKKPPAPDPFARSSPRTSMKIQQNQSIRRPSRQLAANKPS) is disordered. Phosphoserine occurs at positions 1362 and 1374. A compositionally biased stretch (polar residues) spans 1362–1376 (SPRTSMKIQQNQSIR).

Belongs to the protein kinase superfamily. AGC Ser/Thr protein kinase family. Homodimer. Interacts with IRS1. Interacts with RAF1. Interacts with RHOA (activated by GTP), RHOB and RHOC. Interacts with PPP1R12A. Interacts with EP300. Interacts with CHORDC1. Interacts with BRCA2. Interacts with NPM1; this interaction enhances ROCK2 activity. Interacts with SORL1. Interacts with PJVK. Mg(2+) is required as a cofactor. Autophosphorylated. Phosphorylation at Tyr-722 reduces its binding to RHOA and is crucial for focal adhesion dynamics. Dephosphorylation by PTPN11 stimulates its RHOA binding activity. Post-translationally, cleaved by granzyme B during apoptosis. This leads to constitutive activation of the kinase and membrane blebbing.

The protein resides in the cytoplasm. It is found in the cell membrane. The protein localises to the nucleus. It localises to the cytoskeleton. Its subcellular location is the microtubule organizing center. The protein resides in the centrosome. The enzyme catalyses L-seryl-[protein] + ATP = O-phospho-L-seryl-[protein] + ADP + H(+). It carries out the reaction L-threonyl-[protein] + ATP = O-phospho-L-threonyl-[protein] + ADP + H(+). With respect to regulation, activated by RHOA binding. Inhibited by Y-27632. Functionally, protein kinase which is a key regulator of actin cytoskeleton and cell polarity. Involved in regulation of smooth muscle contraction, actin cytoskeleton organization, stress fiber and focal adhesion formation, neurite retraction, cell adhesion and motility via phosphorylation of ADD1, BRCA2, CNN1, EZR, DPYSL2, EP300, MSN, MYL9/MLC2, NPM1, RDX, PPP1R12A and VIM. Phosphorylates SORL1 and IRF4. Acts as a negative regulator of VEGF-induced angiogenic endothelial cell activation. Positively regulates the activation of p42/MAPK1-p44/MAPK3 and of p90RSK/RPS6KA1 during myogenic differentiation. Plays an important role in the timely initiation of centrosome duplication. Inhibits keratinocyte terminal differentiation. May regulate closure of the eyelids and ventral body wall through organization of actomyosin bundles. Plays a critical role in the regulation of spine and synaptic properties in the hippocampus. Plays an important role in generating the circadian rhythm of the aortic myofilament Ca(2+) sensitivity and vascular contractility by modulating the myosin light chain phosphorylation. The polypeptide is Rho-associated protein kinase 2 (ROCK2) (Sus scrofa (Pig)).